Reading from the N-terminus, the 594-residue chain is AT-rich interactive domain-containing protein 5A (594 aa).

The disordered stretch occupies residues 1-56 (MAAPVKGNRKQSTEGDALDPPASPKPAGKQNGIQNPISLEDSPEAGGEREEEQERE). The tract at residues 1-300 (MAAPVKGNRK…AVHLPESPQS (300 aa)) is interaction with SOX9. A Phosphoserine modification is found at S23. Residues 55 to 147 (REEEQAFLVS…LVLPYVRHLK (93 aa)) enclose the ARID domain. Residues K85 and K94 each participate in a glycyl lysine isopeptide (Lys-Gly) (interchain with G-Cter in ubiquitin) cross-link. The segment at 146 to 223 (LKGEDDKPLP…NSTEQQGLAS (78 aa)) is disordered. Residues 165 to 189 (MAKENRGDDGATERPKKAKEERRMD) are compositionally biased toward basic and acidic residues. A phosphoserine mark is found at S256 and S289. Disordered regions lie at residues 281-331 (RHGA…EAQA) and 426-454 (AESPTLPPTFPSSPGLGSKRSLEEEGAAH). A compositionally biased stretch (polar residues) spans 297–306 (SPQSPKGLTE). A phosphoserine mark is found at S438 and S463.

In terms of assembly, interacts with SOX9. Interacts with ESR1. Interacts with RORC. Phosphorylated by MAPK14 on serine residues involving a TLR4 signaling pathway upon lipopolysaccharide (LPS) stimulation leading to its ubiquitination and proteasomal degradation. Post-translationally, ubiquitinated leading to proteasomal degradation; involving WWP1 linked to MAPK14-mediated phosphorylation upon LPS stimulation.

Its subcellular location is the nucleus. Functionally, DNA-binding protein that may regulate transcription and act as a repressor by binding to AT-rich stretches in the promoter region of target genes. May positively regulate chondrocyte-specific transcription such as of COL2A1 in collaboration with SOX9 and positively regulate histone H3 acetylation at chondrocyte-specific genes. May stimulate early-stage chondrocyte differentiation and inhibit later stage differention. Can repress ESR1-mediated transcriptional activation; proposed to act as corepressor for selective nuclear hormone receptors. As an RNA-binding protein, involved in the regulation of inflammatory response by stabilizing selective inflammation-related mRNAs, such as STAT3 and TBX21. Also stabilizes IL6 mRNA. Binds to stem loop structures located in the 3'UTRs of IL6, STAT3 and TBX21 mRNAs; at least for STAT3 prevents binding of ZC3H12A to the mRNA stem loop structure thus inhibiting its degradation activity. Contributes to elevated IL6 levels possibly implicated in autoimmunity processes. IL6-dependent stabilization of STAT3 mRNA may promote differentiation of naive CD4+ T-cells into T-helper Th17 cells. In CD4+ T-cells may also inhibit RORC-induced Th17 cell differentiation independently of IL6 signaling. Stabilization of TBX21 mRNA contributes to elevated interferon-gamma secretion in Th1 cells possibly implicated in the establishment of septic shock. Stabilizes TNFRSF4/OX40 mRNA by binding to the conserved stem loop structure in its 3'UTR; thereby competing with the mRNA-destabilizing functions of RC3H1 and endoribonuclease ZC3H12A. This chain is AT-rich interactive domain-containing protein 5A (ARID5A), found in Homo sapiens (Human).